A 224-amino-acid chain; its full sequence is Germin-like protein 8-5 (224 aa).

The N-terminal stretch at 1 to 22 (MASPSSLCLLAALALISWQAMA) is a signal peptide. Cysteine 32 and cysteine 47 are oxidised to a cystine. Positions 62–212 (AKLDTPRKTN…AFQVEKGTID (151 aa)) constitute a Cupin type-1 domain. Asparagine 76 carries an N-linked (GlcNAc...) asparagine glycan. Histidine 109, histidine 111, and glutamate 116 together coordinate Mn(2+). Asparagine 135 carries an N-linked (GlcNAc...) asparagine glycan. Histidine 157 contacts Mn(2+).

This sequence belongs to the germin family. As to quaternary structure, oligomer (believed to be a pentamer but probably hexamer).

Its subcellular location is the secreted. It localises to the extracellular space. The protein resides in the apoplast. In terms of biological role, plays a role in broad-spectrum disease resistance. Probably has no oxalate oxidase activity even if the active site is conserved. The protein is Germin-like protein 8-5 of Oryza sativa subsp. japonica (Rice).